A 454-amino-acid chain; its full sequence is Bifunctional protein GlmU (454 aa).

The segment at 1 to 226 is pyrophosphorylase; it reads MSLDIVILAA…AMEVQGANDR (226 aa). Residues 8-11, K22, Q73, 78-79, 99-101, G136, E151, N166, and N224 each bind UDP-N-acetyl-alpha-D-glucosamine; these read LAAG, GT, and YGD. D101 is a binding site for Mg(2+). N224 is a Mg(2+) binding site. A linker region spans residues 227 to 247; sequence LQLAQLERHYQSRVARRLMAQ. The interval 248 to 454 is N-acetyltransferase; it reads GVTLRDPARF…GWQRPTKQKK (207 aa). Residues R330 and K348 each coordinate UDP-N-acetyl-alpha-D-glucosamine. The active-site Proton acceptor is H360. UDP-N-acetyl-alpha-D-glucosamine is bound by residues Y363 and N374. Acetyl-CoA contacts are provided by residues A377, 383–384, S402, A420, and R437; that span reads NY.

This sequence in the N-terminal section; belongs to the N-acetylglucosamine-1-phosphate uridyltransferase family. In the C-terminal section; belongs to the transferase hexapeptide repeat family. As to quaternary structure, homotrimer. Mg(2+) serves as cofactor.

It localises to the cytoplasm. It carries out the reaction alpha-D-glucosamine 1-phosphate + acetyl-CoA = N-acetyl-alpha-D-glucosamine 1-phosphate + CoA + H(+). The catalysed reaction is N-acetyl-alpha-D-glucosamine 1-phosphate + UTP + H(+) = UDP-N-acetyl-alpha-D-glucosamine + diphosphate. It participates in nucleotide-sugar biosynthesis; UDP-N-acetyl-alpha-D-glucosamine biosynthesis; N-acetyl-alpha-D-glucosamine 1-phosphate from alpha-D-glucosamine 6-phosphate (route II): step 2/2. The protein operates within nucleotide-sugar biosynthesis; UDP-N-acetyl-alpha-D-glucosamine biosynthesis; UDP-N-acetyl-alpha-D-glucosamine from N-acetyl-alpha-D-glucosamine 1-phosphate: step 1/1. It functions in the pathway bacterial outer membrane biogenesis; LPS lipid A biosynthesis. Its function is as follows. Catalyzes the last two sequential reactions in the de novo biosynthetic pathway for UDP-N-acetylglucosamine (UDP-GlcNAc). The C-terminal domain catalyzes the transfer of acetyl group from acetyl coenzyme A to glucosamine-1-phosphate (GlcN-1-P) to produce N-acetylglucosamine-1-phosphate (GlcNAc-1-P), which is converted into UDP-GlcNAc by the transfer of uridine 5-monophosphate (from uridine 5-triphosphate), a reaction catalyzed by the N-terminal domain. The sequence is that of Bifunctional protein GlmU from Azotobacter vinelandii (strain DJ / ATCC BAA-1303).